Here is a 405-residue protein sequence, read N- to C-terminus: CLIP domain-containing serine protease B8 (405 aa).

Residues 1–24 form the signal peptide; the sequence is MSSAVLLLLVCGCALAVLSPVAYG. Intrachain disulfides connect C41-C94, C52-C84, and C58-C95. Residues 41–95 form the Clip domain; sequence CDIPNEPNPGQCMLPAECVAYGKINDVSSLSSIERFSFIKQIQCNGSDTVPYVCC. Residues N85 and N108 are each glycosylated (N-linked (GlcNAc...) asparagine). The region spanning 137–404 is the Peptidase S1 domain; it reads IRGGQLAEID…YLPWIKMYTG (268 aa). The cysteines at positions 167 and 183 are disulfide-linked. Residues H182 and D249 each act as charge relay system in the active site. 2 disulfide bridges follow: C322/C339 and C349/C380. S353 functions as the Charge relay system in the catalytic mechanism.

This sequence belongs to the peptidase S1 family. CLIP subfamily. Proteolytic cleavage is necessary for activation. Cleaved and activated by CLIPB4.

Its subcellular location is the secreted. Serine protease that functions in the melanization-mediated immune response. Preferentially, cleaves substrates with an arginine at the P1 site. May be involved in the activation of the prophenoloxidase cascade upstream of CLIPB9; does not cleave prophenoloxidase. The chain is CLIP domain-containing serine protease B8 from Anopheles gambiae (African malaria mosquito).